The following is a 293-amino-acid chain: Acetylglutamate kinase (293 aa).

Residues 68–69 (GG), R90, and N189 contribute to the substrate site.

This sequence belongs to the acetylglutamate kinase family. ArgB subfamily.

Its subcellular location is the cytoplasm. It catalyses the reaction N-acetyl-L-glutamate + ATP = N-acetyl-L-glutamyl 5-phosphate + ADP. The protein operates within amino-acid biosynthesis; L-arginine biosynthesis; N(2)-acetyl-L-ornithine from L-glutamate: step 2/4. Functionally, catalyzes the ATP-dependent phosphorylation of N-acetyl-L-glutamate. The polypeptide is Acetylglutamate kinase (Mycobacterium marinum (strain ATCC BAA-535 / M)).